The following is a 163-amino-acid chain: Nodulin-13 (163 aa).

Residues Gln-68 and Tyr-82 each coordinate kinetin. Residues Gln-68 and Tyr-82 each contribute to the N(6)-dimethylallyladenine site. 3 residues coordinate trans-zeatin: Gln-68, Tyr-82, and Tyr-133.

It belongs to the BetVI family. As to quaternary structure, homodimer. As to expression, expressed in nodules, but not in leaves, stems, flowers and roots. Specifically located in the nodule cortex.

Its function is as follows. May be involved in nodule organogenesis rather in the processes related to nitrogen fixation or interactions with the bacteria. May regulate nodulation by controlling the levels of freely available cytokinins. The chain is Nodulin-13 (N13) from Medicago truncatula (Barrel medic).